The primary structure comprises 299 residues: GTPase Era (299 aa).

An Era-type G domain is found at 8-176 (RCGYVAIVGR…EKLVGERLPE (169 aa)). Residues 16–23 (GRPNVGKS) are G1. 16-23 (GRPNVGKS) is a binding site for GTP. The interval 42-46 (QTTRH) is G2. Residues 63 to 66 (DTPG) form a G3 region. GTP contacts are provided by residues 63 to 67 (DTPGL) and 125 to 128 (NKAD). A G4 region spans residues 125 to 128 (NKAD). Residues 155–157 (ISA) are G5. One can recognise a KH type-2 domain in the interval 199-283 (IREKIMRQLG…MLNLWVKVKG (85 aa)).

It belongs to the TRAFAC class TrmE-Era-EngA-EngB-Septin-like GTPase superfamily. Era GTPase family. As to quaternary structure, monomer.

It localises to the cytoplasm. It is found in the cell inner membrane. In terms of biological role, an essential GTPase that binds both GDP and GTP, with rapid nucleotide exchange. Plays a role in 16S rRNA processing and 30S ribosomal subunit biogenesis and possibly also in cell cycle regulation and energy metabolism. The polypeptide is GTPase Era (Ectopseudomonas mendocina (strain ymp) (Pseudomonas mendocina)).